A 224-amino-acid chain; its full sequence is UPF0111 protein CT_691 (224 aa).

The protein belongs to the UPF0111 family.

This is UPF0111 protein CT_691 from Chlamydia trachomatis serovar D (strain ATCC VR-885 / DSM 19411 / UW-3/Cx).